Consider the following 107-residue polypeptide: UPF0060 membrane protein Sala_0701 (107 aa).

Transmembrane regions (helical) follow at residues 4-24 (FAYI…WAWL), 30-50 (VWWV…LTLV), 60-80 (AAYG…VEGA), and 87-107 (LIGA…PRGG).

The protein belongs to the UPF0060 family.

Its subcellular location is the cell inner membrane. This chain is UPF0060 membrane protein Sala_0701, found in Sphingopyxis alaskensis (strain DSM 13593 / LMG 18877 / RB2256) (Sphingomonas alaskensis).